Consider the following 156-residue polypeptide: Jun dimerization protein 2 (156 aa).

Positions 56–95 (KRPFDAIKSEDDDDDERKKRRREKNKVAAARCRNRKKERT) are disordered. In terms of domain architecture, bZIP spans 70 to 133 (DERKKRRREK…QQLIVMLNLH (64 aa)). Residues 72 to 94 (RKKRRREKNKVAAARCRNRKKER) are basic motif. The tract at residues 98 to 126 (LQKESERLEMLNSDLKSQIEELKSERQQL) is leucine-zipper.

It belongs to the bZIP family. ATF subfamily.

It is found in the nucleus. Its function is as follows. Component of the AP-1 transcription factor that represses transactivation mediated by the Jun family of proteins. This chain is Jun dimerization protein 2 (jdp2), found in Danio rerio (Zebrafish).